The sequence spans 218 residues: MNATCTPSLPYDASRLRELAHLLIGTISEFAQAGWTPATSSNFSHRLDEHHVAITVSGRDKRCLREEDIMAVDLDGNAVGHPHTPSAETLLHTQLYRRFPEIGCVLHTHSLTQTVASRVYAGAGHISLKDYELLKAFAGHSTHETTLDVPVFCNTQNMNILAAQVDTLLDKQRMWGYLINGHGMYTWGNTLADARRHLEALEFLLHCELDLLKLRGYL.

Residues histidine 107 and histidine 109 each coordinate Zn(2+).

The protein belongs to the aldolase class II family. MtnB subfamily. Requires Zn(2+) as cofactor.

The enzyme catalyses 5-(methylsulfanyl)-D-ribulose 1-phosphate = 5-methylsulfanyl-2,3-dioxopentyl phosphate + H2O. It participates in amino-acid biosynthesis; L-methionine biosynthesis via salvage pathway; L-methionine from S-methyl-5-thio-alpha-D-ribose 1-phosphate: step 2/6. Catalyzes the dehydration of methylthioribulose-1-phosphate (MTRu-1-P) into 2,3-diketo-5-methylthiopentyl-1-phosphate (DK-MTP-1-P). The protein is Methylthioribulose-1-phosphate dehydratase of Xylella fastidiosa (strain Temecula1 / ATCC 700964).